The chain runs to 248 residues: Non-specific acid phosphatase (248 aa).

Residues 1–20 form the signal peptide; that stretch reads MKKLLAVFCAGAFVSTSVFA.

The protein belongs to the class A bacterial acid phosphatase family.

Its subcellular location is the periplasm. The enzyme catalyses a phosphate monoester + H2O = an alcohol + phosphate. The polypeptide is Non-specific acid phosphatase (phoN) (Providencia stuartii).